A 390-amino-acid chain; its full sequence is Small ribosomal subunit protein uS9m (390 aa).

Residues 368–390 (PRIRERKKPGQEGARRKFTWKKR) form a disordered region.

It belongs to the universal ribosomal protein uS9 family. Component of the mitochondrial ribosome small subunit (28S) which comprises a 12S rRNA and about 30 distinct proteins.

It is found in the mitochondrion. In Mus musculus (Mouse), this protein is Small ribosomal subunit protein uS9m (Mrps9).